A 260-amino-acid polypeptide reads, in one-letter code: Outer membrane protein assembly factor BamD (260 aa).

The first 19 residues, 1–19 (MRKLKSFTFIALTAFAITA), serve as a signal peptide directing secretion. Cys-20 is lipidated: N-palmitoyl cysteine. Cys-20 carries the S-diacylglycerol cysteine lipid modification.

The protein belongs to the BamD family. As to quaternary structure, part of the Bam complex.

Its subcellular location is the cell outer membrane. Functionally, part of the outer membrane protein assembly complex, which is involved in assembly and insertion of beta-barrel proteins into the outer membrane. This Pasteurella multocida (strain Pm70) protein is Outer membrane protein assembly factor BamD.